Reading from the N-terminus, the 405-residue chain is Envelope glycoprotein G (405 aa).

A signal peptide spans 1–19; it reads MLAVGATLCLLSFLTGATG. 5 N-linked (GlcNAc...) asparagine; by host glycosylation sites follow: asparagine 83, asparagine 138, asparagine 174, asparagine 221, and asparagine 288. A helical membrane pass occupies residues 389–405; the sequence is LKTVYICLALIGLAHVP.

The protein belongs to the alphaherpesvirinae glycoprotein G family.

The protein localises to the virion membrane. Its function is as follows. Chemokine-binding protein that inhibits neutrophils' chemotaxis. In Equine herpesvirus 4 (strain 1942) (EHV-4), this protein is Envelope glycoprotein G (gG).